The following is a 479-amino-acid chain: RAC-gamma serine/threonine-protein kinase (479 aa).

The residue at position 2 (S2) is an N-acetylserine. The region spanning 5 to 107 (TIVKEGWVQK…WTEAIQAVAD (103 aa)) is the PH domain. Residues C59 and C76 are joined by a disulfide bond. The Protein kinase domain occupies 148-405 (FDYLKLLGKG…AKEIMRHSFF (258 aa)). ATP-binding positions include 154–162 (LGKGTFGKV) and K177. D271 serves as the catalytic Proton acceptor. Residues C293 and C307 are joined by a disulfide bond. O-linked (GlcNAc) threonine glycosylation is present at T302. Position 305 is a phosphothreonine; by PDPK1 (T305). A glycan (O-linked (GlcNAc) threonine) is linked at T309. Residues 406–479 (SGVNWQDVYD…QFSYSASGRE (74 aa)) enclose the AGC-kinase C-terminal domain. T447 carries the post-translational modification Phosphothreonine. Residues 458–479 (DCMDNERRPHFPQFSYSASGRE) form a disordered region. Phosphoserine; by PKC/PRKCZ is present on S472. S472 carries O-linked (GlcNAc) serine; alternate glycosylation.

This sequence belongs to the protein kinase superfamily. AGC Ser/Thr protein kinase family. RAC subfamily. In terms of assembly, interacts (via PH domain) with TCL1A; this enhances AKT3 phosphorylation and activation. Interacts with TRAF6. Interacts with KCTD20. Interacts with BTBD10. Post-translationally, phosphorylation on Thr-305 and Ser-472 is required for full activity. Phosphorylation of the activation loop at Thr-305 by PDPK1/PDK1 is a prerequisite for full activation. Phosphorylation at Ser-472 by mTORC2 in response to growth factors plays a key role in AKT1 activation by facilitating subsequent phosphorylation of the activation loop by PDPK1/PDK1. Ubiquitinated. When fully phosphorylated and translocated into the nucleus, undergoes 'Lys-48'-polyubiquitination catalyzed by TTC3, leading to its degradation by the proteasome. In terms of processing, O-GlcNAcylation at Thr-302 and Thr-309 inhibits activating phosphorylation at Thr-305 via disrupting the interaction between AKT and PDPK1/PDK1. As to expression, in adult tissues, it is highly expressed in brain, lung and kidney, but weakly in heart, testis and liver. In fetal tissues, it is highly expressed in heart, liver and brain and not at all in kidney.

It localises to the nucleus. The protein localises to the cytoplasm. Its subcellular location is the membrane. The enzyme catalyses L-seryl-[protein] + ATP = O-phospho-L-seryl-[protein] + ADP + H(+). The catalysed reaction is L-threonyl-[protein] + ATP = O-phospho-L-threonyl-[protein] + ADP + H(+). With respect to regulation, two specific sites, one in the kinase domain (Thr-305) and the other in the C-terminal regulatory region (Ser-472), need to be phosphorylated for its full activation. IGF-1 leads to the activation of AKT3, which may play a role in regulating cell survival. Its function is as follows. AKT3 is one of 3 closely related serine/threonine-protein kinases (AKT1, AKT2 and AKT3) called the AKT kinase, and which regulate many processes including metabolism, proliferation, cell survival, growth and angiogenesis. This is mediated through serine and/or threonine phosphorylation of a range of downstream substrates. Over 100 substrate candidates have been reported so far, but for most of them, no isoform specificity has been reported. AKT3 is the least studied AKT isoform. It plays an important role in brain development and is crucial for the viability of malignant glioma cells. AKT3 isoform may also be the key molecule in up-regulation and down-regulation of MMP13 via IL13. Required for the coordination of mitochondrial biogenesis with growth factor-induced increases in cellular energy demands. Down-regulation by RNA interference reduces the expression of the phosphorylated form of BAD, resulting in the induction of caspase-dependent apoptosis. This Homo sapiens (Human) protein is RAC-gamma serine/threonine-protein kinase (AKT3).